Consider the following 449-residue polypeptide: 23S rRNA (uracil(1939)-C(5))-methyltransferase RlmD (449 aa).

The 66-residue stretch at 1–66 (MGRSRYHNKL…AKFDEAKVVE (66 aa)) folds into the TRAM domain. The [4Fe-4S] cluster site is built by cysteine 79, cysteine 85, cysteine 88, and cysteine 169. S-adenosyl-L-methionine-binding residues include glutamine 280, phenylalanine 309, asparagine 314, glutamate 330, asparagine 357, and aspartate 379. Cysteine 405 serves as the catalytic Nucleophile.

The protein belongs to the class I-like SAM-binding methyltransferase superfamily. RNA M5U methyltransferase family. RlmD subfamily.

It carries out the reaction uridine(1939) in 23S rRNA + S-adenosyl-L-methionine = 5-methyluridine(1939) in 23S rRNA + S-adenosyl-L-homocysteine + H(+). Its function is as follows. Catalyzes the formation of 5-methyl-uridine at position 1939 (m5U1939) in 23S rRNA. The protein is 23S rRNA (uracil(1939)-C(5))-methyltransferase RlmD of Francisella tularensis subsp. holarctica (strain LVS).